Here is a 378-residue protein sequence, read N- to C-terminus: Chaperone protein DnaJ (378 aa).

The 66-residue stretch at 5-70 folds into the J domain; sequence DFYEVLGLSK…QKRAAYDQYG (66 aa). The segment at 133 to 211 adopts a CR-type zinc-finger fold; that stretch reads GITKEIRIPT…CHGDGRVERY (79 aa). 8 residues coordinate Zn(2+): Cys146, Cys149, Cys163, Cys166, Cys185, Cys188, Cys199, and Cys202. CXXCXGXG motif repeat units follow at residues 146–153, 163–170, 185–192, and 199–206; these read CDKCHGSG, CSTCHGAG, CPTCHGRG, and CSKCHGDG.

Belongs to the DnaJ family. In terms of assembly, homodimer. It depends on Zn(2+) as a cofactor.

The protein resides in the cytoplasm. Functionally, participates actively in the response to hyperosmotic and heat shock by preventing the aggregation of stress-denatured proteins and by disaggregating proteins, also in an autonomous, DnaK-independent fashion. Unfolded proteins bind initially to DnaJ; upon interaction with the DnaJ-bound protein, DnaK hydrolyzes its bound ATP, resulting in the formation of a stable complex. GrpE releases ADP from DnaK; ATP binding to DnaK triggers the release of the substrate protein, thus completing the reaction cycle. Several rounds of ATP-dependent interactions between DnaJ, DnaK and GrpE are required for fully efficient folding. Also involved, together with DnaK and GrpE, in the DNA replication of plasmids through activation of initiation proteins. In Proteus mirabilis (strain HI4320), this protein is Chaperone protein DnaJ.